We begin with the raw amino-acid sequence, 449 residues long: Procollagen C-endopeptidase enhancer 1 (449 aa).

Residues 1 to 25 (MLPAATASLLGPLLTACALLPFAQG) form the signal peptide. The N-linked (GlcNAc...) asparagine glycan is linked to asparagine 29. Intrachain disulfides connect cysteine 37–cysteine 63, cysteine 90–cysteine 112, cysteine 159–cysteine 186, cysteine 213–cysteine 236, cysteine 318–cysteine 386, cysteine 322–cysteine 389, and cysteine 333–cysteine 437. CUB domains lie at 37–149 (CGGD…YSGR) and 159–273 (CGGR…YKTL). A Phosphoserine modification is found at serine 50. Positions 271–321 (KTLPRGTAKEGQGPGPKRGTEPKVKLPPKSQPPEKTEESPSAPDAPTCPKQ) are disordered. Positions 318 to 437 (CPKQCRRTGT…ILTNLSKRKC (120 aa)) constitute an NTR domain. An N-linked (GlcNAc...) asparagine glycan is attached at asparagine 431.

In terms of assembly, interacts with EFEMP2. In terms of processing, C-terminally processed at multiple positions.

Its subcellular location is the secreted. Functionally, binds to the C-terminal propeptide of type I procollagen and enhances procollagen C-proteinase activity. In terms of biological role, C-terminal processed part of PCPE (CT-PCPE) may have an metalloproteinase inhibitory activity. This is Procollagen C-endopeptidase enhancer 1 (PCOLCE) from Homo sapiens (Human).